The following is a 482-amino-acid chain: NADH-quinone oxidoreductase subunit N (482 aa).

Helical transmembrane passes span 10–30 (ALGPALPELILTVGALVLILY), 44–64 (VGAIIVLIVALFSVVSQPLGA), 77–97 (GFARVMKTLTLVGSLAALLLA), 113–133 (ILIVLSSIGMLIMASANDLIG), 166–186 (FVLGALSSGMLLYGASLVYGF), 206–226 (LGLVLGIVFVAAGVAFKLAAV), 243–265 (VTAFFASAPKMAAMAMTVRVFIG), 277–296 (IIVFIAIASMALGSFAAIGQ), 302–322 (LMAYSSIGNVGYALIGLAAGT), 328–348 (GVVVYMAIYLAMTLGAFAVIL), 374–394 (AFCLAMMMFSLAGIPPLAGFF), 397–417 (FYVFAAAIKAGLNVLAVIGVV), and 451–471 (IVLAASSVVVVLFWIVPAPLV).

It belongs to the complex I subunit 2 family. As to quaternary structure, NDH-1 is composed of 14 different subunits. Subunits NuoA, H, J, K, L, M, N constitute the membrane sector of the complex.

The protein resides in the cell inner membrane. It carries out the reaction a quinone + NADH + 5 H(+)(in) = a quinol + NAD(+) + 4 H(+)(out). In terms of biological role, NDH-1 shuttles electrons from NADH, via FMN and iron-sulfur (Fe-S) centers, to quinones in the respiratory chain. The immediate electron acceptor for the enzyme in this species is believed to be ubiquinone. Couples the redox reaction to proton translocation (for every two electrons transferred, four hydrogen ions are translocated across the cytoplasmic membrane), and thus conserves the redox energy in a proton gradient. The chain is NADH-quinone oxidoreductase subunit N from Methylobacterium nodulans (strain LMG 21967 / CNCM I-2342 / ORS 2060).